We begin with the raw amino-acid sequence, 279 residues long: Protein PHOTOPERIODIC CONTROL OF HYPOCOTYL 1-LIKE (279 aa).

In terms of assembly, interacts with light-activated phyB. Binds directly to PIF1 and COP1. Ubiquitinated by COP1 in darkness; this leads to proteasomal degradation. Mainly expressed in cotyledons, hypocotyls, leaves.

The protein localises to the nucleus. Functionally, together with PCH1, regulates growth and development adaptation to the ambient environment by controlling negatively phytochrome B (phyB) dark reversion, a temperature-dependent thermal relaxation process during which phyB reverts from the active to the inactive state. Contributes to red (R) light-triggered photomorphogenesis. Promotes various light responses such as seed germination, hypocotyl gravitropism and chlorophyll biosynthesis, via direct interaction with PIF1 and COP1. Prevents DNA-binding ability of PIF1 to negatively regulate the expressions of its target genes. Facilitates the physical interaction between phyB and PIF1 and the subsequent light-induced degradation of PIF1. This chain is Protein PHOTOPERIODIC CONTROL OF HYPOCOTYL 1-LIKE, found in Arabidopsis thaliana (Mouse-ear cress).